The primary structure comprises 86 residues: Large ribosomal subunit protein bL31 (86 aa).

Positions 16, 18, 38, and 41 each coordinate Zn(2+).

This sequence belongs to the bacterial ribosomal protein bL31 family. Type A subfamily. Part of the 50S ribosomal subunit. The cofactor is Zn(2+).

Binds the 23S rRNA. This chain is Large ribosomal subunit protein bL31, found in Acidothermus cellulolyticus (strain ATCC 43068 / DSM 8971 / 11B).